Here is a 396-residue protein sequence, read N- to C-terminus: OTU domain-containing protein 3 (396 aa).

The disordered stretch occupies residues 1–49 (MSRKQAAKSRPGSGGRRAEAERKRDERAARRALAKERRNRPDPGGSGCE). The span at 16–41 (RRAEAERKRDERAARRALAKERRNRP) shows a compositional bias: basic and acidic residues. One can recognise an OTU domain in the interval 64–188 (LKLREVPGDG…GEHYDSVRRI (125 aa)). At Lys65 the chain carries N6-acetyllysine. The tract at residues 69 to 75 (VPGDGNC) is cys-loop. The active site involves Asp72. The Nucleophile role is filled by Cys75. Lys121 and Lys128 each carry N6-acetyllysine. The interval 126–136 (LSKPGTFAGND) is variable-loop. Residues 176 to 181 (YRYGEH) form a his-loop region. Residue His181 is part of the active site. At Lys219 the chain carries N6-acetyllysine. Residues 229–269 (DDVEDAVHKVGSATGCTDFNLIVQNLEAENYNIKSAITALL) enclose the UBA-like domain. The interval 275 to 381 (TGNDAEENHE…RDTGRSEADM (107 aa)) is disordered. 3 stretches are compositionally biased toward basic and acidic residues: residues 280–301 (EENH…EAGS), 312–331 (NEGR…ESKA), and 343–379 (QRRE…RSEA). Lys290 bears the N6-acetyllysine mark.

In terms of processing, glucose and fatty acids stimulate CREBBP-dependent acetylation, promoting its nuclear translocation.

It is found in the cytoplasm. It localises to the nucleus. The catalysed reaction is Thiol-dependent hydrolysis of ester, thioester, amide, peptide and isopeptide bonds formed by the C-terminal Gly of ubiquitin (a 76-residue protein attached to proteins as an intracellular targeting signal).. Deubiquitinating enzyme that hydrolyzes 'Lys-6'- and 'Lys-11'-linked polyubiquitin. Also hydrolyzes heterotypic (mixed and branched) and homotypic chains. Important regulator of energy metabolism. Glucose and fatty acids trigger its nuclear translocation by CBP-dependent acetylation. In the nucleus, deubiquitinates and stabilizes the nuclear receptor PPARD regulating the expression of various genes involved in glucose and lipid metabolism and oxidative phosphorylation. Also acts as a negative regulator of the ribosome quality control (RQC) by mediating deubiquitination of 40S ribosomal proteins RPS10/eS10 and RPS20/uS10, thereby antagonizing ZNF598-mediated 40S ubiquitination. This Mus musculus (Mouse) protein is OTU domain-containing protein 3 (Otud3).